The primary structure comprises 229 residues: Ribosome maturation factor RimM (229 aa).

Residues 1–21 (MAGHDSGNAKRGRSPSFGVFV) are disordered. A PRC barrel domain is found at 148 to 229 (ADEFYWVDLI…RVVVDWEADY (82 aa)).

The protein belongs to the RimM family. Binds ribosomal protein uS19.

Its subcellular location is the cytoplasm. Its function is as follows. An accessory protein needed during the final step in the assembly of 30S ribosomal subunit, possibly for assembly of the head region. Essential for efficient processing of 16S rRNA. May be needed both before and after RbfA during the maturation of 16S rRNA. It has affinity for free ribosomal 30S subunits but not for 70S ribosomes. This Burkholderia mallei (strain NCTC 10247) protein is Ribosome maturation factor RimM.